A 62-amino-acid polypeptide reads, in one-letter code: Large ribosomal subunit protein bL28 (62 aa).

Residues 1–28 (MARVCTITGRKARSGNSRSHAMNATKRK) form a disordered region.

This sequence belongs to the bacterial ribosomal protein bL28 family.

This Bacillus anthracis (strain CDC 684 / NRRL 3495) protein is Large ribosomal subunit protein bL28.